The following is a 104-amino-acid chain: UPF0145 protein VNG_2432C (104 aa).

This sequence belongs to the UPF0145 family.

In Halobacterium salinarum (strain ATCC 700922 / JCM 11081 / NRC-1) (Halobacterium halobium), this protein is UPF0145 protein VNG_2432C.